The following is a 171-amino-acid chain: UPF0763 protein Hac_0849 (171 aa).

It belongs to the UPF0763 family.

This Helicobacter acinonychis (strain Sheeba) protein is UPF0763 protein Hac_0849.